The chain runs to 692 residues: Vacuolar amino acid transporter 3 (692 aa).

The segment covering 1–14 has biased composition (polar residues); the sequence is MNGKEVSSGSGRTQ. The segment at 1–71 is disordered; it reads MNGKEVSSGS…TGGLLKKPPL (71 aa). Residues 15-24 show a composition bias toward low complexity; that stretch reads SNNNKKNNNG. Over residues 28-38 the composition is skewed to polar residues; it reads GISHASGSPLT. 3 positions are modified to phosphoserine: Ser59, Ser119, and Ser121. 2 disordered regions span residues 135–170 and 258–294; these read KWTN…SNRK and DLSE…GRHP. Low complexity predominate over residues 141–153; sequence PSSPSQYQYPSQP. The span at 154–167 shows a compositional bias: polar residues; sequence ALSTSIPSQAPSFS. A Phosphoserine modification is found at Ser165. The span at 258–279 shows a compositional bias: acidic residues; the sequence is DLSEEEEEEEETEEEPEEEALE. A run of 11 helical transmembrane segments spans residues 302–322, 329–349, 374–394, 412–432, 443–463, 483–503, 519–539, 561–581, 607–627, 630–650, and 665–685; these read AVLL…PKAF, FSAL…VSLI, FAIL…YTVF, GSIS…PLSL, ALIA…YSIY, WSLF…LIPI, AVMC…YAAF, VQLL…FPAI, YFRC…ANDL, FVSL…PPLL, and LLLD…TSWQ.

This sequence belongs to the amino acid/polyamine transporter 2 family.

The protein resides in the vacuole membrane. In terms of biological role, involved in amino acid efflux from the vacuole to the cytoplasm. Capable of transporting large neutral amino acids including tyrosine, glutamine, asparagine, isoleucine and leucine. This Saccharomyces cerevisiae (strain ATCC 204508 / S288c) (Baker's yeast) protein is Vacuolar amino acid transporter 3 (AVT3).